The primary structure comprises 135 residues: Crossover junction endodeoxyribonuclease Hje (135 aa).

3 residues coordinate Mg(2+): Glu-10, Asp-39, and Glu-52.

Belongs to the Holliday junction resolvase Hjc family. Hje subfamily. Homodimer. Requires Mg(2+) as cofactor.

The enzyme catalyses Endonucleolytic cleavage at a junction such as a reciprocal single-stranded crossover between two homologous DNA duplexes (Holliday junction).. Its function is as follows. A structure-specific endonuclease that resolves Holliday junction (HJ) intermediates during genetic recombination. Acts only on 4-way DNA junctions in a sequence non-specific manner; introduces paired nicks in opposing strands 2 bases 3' of the point of strand exchange only on continuous strands of 4-way junction DNA. Cleaves both mobile and immobile junctions. Plays a more direct role in DNA repair than Hjc. Overexpression of this protein decreases the growth rate, and leads to genomic instability, and global transcriptomic changes. The polypeptide is Crossover junction endodeoxyribonuclease Hje (Saccharolobus islandicus (strain REY15A) (Sulfolobus islandicus)).